Consider the following 621-residue polypeptide: DnaJ homolog subfamily C member 2 (621 aa).

Met-1 is modified (N-acetylmethionine). Phosphoserine occurs at positions 47, 49, 60, and 63. Residues 88-161 (DHYAVLGLGH…VKRRAFNSVD (74 aa)) enclose the J domain. A ZRF1-UBD region spans residues 160-250 (VDPTFDNSVP…RDERKWIEKQ (91 aa)). Ser-183 bears the Phosphoserine mark. Disordered stretches follow at residues 287 to 312 (GKAKKEAEKRAKAEARRKEQEAKEKQ) and 426 to 453 (KEEADARMRQASKNAEKSTGGSGSGSKN). 2 consecutive SANT domains span residues 449 to 511 (SGSK…KLDP) and 549 to 604 (IDSI…EMVK).

In terms of assembly, component of ribosome-associated complex (RAC), a heterodimer composed of Hsp70/DnaK-type chaperone HSPA14 and Hsp40/DnaJ-type chaperone DNAJC2. Interacts (via ZRF1-UBD region) with ID1. Phosphorylated in M (mitotic) phase.

Its subcellular location is the nucleus. The protein resides in the cytoplasm. The protein localises to the cytosol. In terms of biological role, acts both as a chaperone in the cytosol and as a chromatin regulator in the nucleus. When cytosolic, acts as a molecular chaperone: component of the ribosome-associated complex (RAC), a complex involved in folding or maintaining nascent polypeptides in a folding-competent state. In the RAC complex, stimulates the ATPase activity of the ribosome-associated pool of Hsp70-type chaperones HSPA14 that bind to the nascent polypeptide chain. When nuclear, mediates the switching from polycomb-repressed genes to an active state: specifically recruited at histone H2A ubiquitinated at 'Lys-119' (H2AK119ub), and promotes the displacement of the polycomb PRC1 complex from chromatin, thereby facilitating transcription activation. This is DnaJ homolog subfamily C member 2 (Dnajc2) from Rattus norvegicus (Rat).